The sequence spans 282 residues: MAMAINVKKWIEENTEYFLPPVCNKLMHNQQLKVMFVGGPNQRKDYHIEEGEELFYQVEGDMCLKIVENGKHKDVHIKQGEMFLLPGRIPHSPQRYADTVGLVFERRRLDTEKDGLRFYVEGSPEVLFEQWFYCEDLGTQLAPIMKEFFSSKQYKSGKPDPDQPKAKMPFCLSTEQVMEPFSFQHWLNKHRLEIIQKKCVSLFGDDHETKAVIYGGGESKQSKAQTDVWIWQLEGTSHVTLGNEVLKLGSGDSLLVPEETLFSWTREDGSIALSTSQVPLPM.

Residues 1–160 (MAMAINVKKW…SKQYKSGKPD (160 aa)) are domain A (catalytic). Arg-43 is a binding site for O2. Fe cation contacts are provided by His-47, Glu-53, and His-91. Glu-53 lines the substrate pocket. Substrate-binding residues include Arg-95 and Glu-105. A linker region spans residues 161–177 (PDQPKAKMPFCLSTEQV). The interval 178-282 (MEPFSFQHWL…LSTSQVPLPM (105 aa)) is domain B.

It belongs to the 3-HAO family. In terms of assembly, monomer. Requires Fe(2+) as cofactor.

It is found in the cytoplasm. It localises to the cytosol. The catalysed reaction is 3-hydroxyanthranilate + O2 = (2Z,4Z)-2-amino-3-carboxymuconate 6-semialdehyde. Its pathway is cofactor biosynthesis; NAD(+) biosynthesis; quinolinate from L-kynurenine: step 3/3. Its function is as follows. Catalyzes the oxidative ring opening of 3-hydroxyanthranilate to 2-amino-3-carboxymuconate semialdehyde, which spontaneously cyclizes to quinolinate. This is 3-hydroxyanthranilate 3,4-dioxygenase (haao) from Xenopus laevis (African clawed frog).